Here is a 1500-residue protein sequence, read N- to C-terminus: DNA-directed RNA polymerase subunit beta' (1500 aa).

The Zn(2+) site is built by C60, C62, C75, and C78. Residues 180 to 199 (DLGGMETAQRSTQRQIEEDY) form a disordered region. D626, D628, and D630 together coordinate Mg(2+). Zn(2+) contacts are provided by C1002, C1075, C1082, and C1085. The segment at 1440 to 1500 (EVQQAEKSAE…DSDHPDLSSL (61 aa)) is disordered. Residues 1449 to 1468 (EPTTTALPTTNGHQAPQSDT) show a composition bias toward polar residues.

It belongs to the RNA polymerase beta' chain family. In terms of assembly, the RNAP catalytic core consists of 2 alpha, 1 beta, 1 beta' and 1 omega subunit. When a sigma factor is associated with the core the holoenzyme is formed, which can initiate transcription. Requires Mg(2+) as cofactor. Zn(2+) serves as cofactor.

It catalyses the reaction RNA(n) + a ribonucleoside 5'-triphosphate = RNA(n+1) + diphosphate. Functionally, DNA-dependent RNA polymerase catalyzes the transcription of DNA into RNA using the four ribonucleoside triphosphates as substrates. The protein is DNA-directed RNA polymerase subunit beta' of Chloroflexus aggregans (strain MD-66 / DSM 9485).